Here is a 288-residue protein sequence, read N- to C-terminus: Phosphatidylglycerol--prolipoprotein diacylglyceryl transferase (288 aa).

A run of 4 helical transmembrane segments spans residues 8–28 (IGPIELHYYGLMYAIAFFVGI), 49–69 (AFVAIISGLIGGRLYYILFNL), 79–99 (ILAVWHGGMAIHGGILGGIAG), and 109–129 (INPLILGDFAAGPFILGQAIG). Residue Arg-130 participates in a 1,2-diacyl-sn-glycero-3-phospho-(1'-sn-glycerol) binding. Transmembrane regions (helical) follow at residues 203-223 (PAMLYELILNLIGFFIIWFIL), 232-252 (GYMWWWYIIIYSINRIIVSFF), and 259-279 (FFNFRAPHVISIILIAVSIFF).

It belongs to the Lgt family.

Its subcellular location is the cell inner membrane. It carries out the reaction L-cysteinyl-[prolipoprotein] + a 1,2-diacyl-sn-glycero-3-phospho-(1'-sn-glycerol) = an S-1,2-diacyl-sn-glyceryl-L-cysteinyl-[prolipoprotein] + sn-glycerol 1-phosphate + H(+). It functions in the pathway protein modification; lipoprotein biosynthesis (diacylglyceryl transfer). Its function is as follows. Catalyzes the transfer of the diacylglyceryl group from phosphatidylglycerol to the sulfhydryl group of the N-terminal cysteine of a prolipoprotein, the first step in the formation of mature lipoproteins. The polypeptide is Phosphatidylglycerol--prolipoprotein diacylglyceryl transferase (Fusobacterium nucleatum subsp. nucleatum (strain ATCC 25586 / DSM 15643 / BCRC 10681 / CIP 101130 / JCM 8532 / KCTC 2640 / LMG 13131 / VPI 4355)).